The chain runs to 333 residues: Ribosomal protein L11 methyltransferase (333 aa).

S-adenosyl-L-methionine is bound by residues T181, G202, D224, and N268.

Belongs to the methyltransferase superfamily. PrmA family.

The protein resides in the cytoplasm. It catalyses the reaction L-lysyl-[protein] + 3 S-adenosyl-L-methionine = N(6),N(6),N(6)-trimethyl-L-lysyl-[protein] + 3 S-adenosyl-L-homocysteine + 3 H(+). Methylates ribosomal protein L11. The polypeptide is Ribosomal protein L11 methyltransferase (Helicobacter pylori (strain ATCC 700392 / 26695) (Campylobacter pylori)).